A 563-amino-acid polypeptide reads, in one-letter code: MDYKKVIAERINKIVDMDVEALYKIIEIPPKKDMGDFALPCFQFAKVLRKAPNAIAEEVCKKIDQSGFEKVENLGPYINFFVDKADFAKETIESVLSERDNYGRSKVGEGKKVLIEYSSPNIAKPFHVGHLFGTVLGSSLYKIFSMEGYDCVRINHLGDWGTQFGKLISAYKRWCDEDALYKDPIKELLRIYVKFHKEAEKDPLLEDEGRMYFKRLEDGEKEEVELWTKFKDLSLREFKKVYNQIGVEFDSYTGESFYSDKIDAIEEELNEKGLLTESNGAKVVMLDEYNMPPCIIKKADGASIYATRDLAAAEYRKKTYNFDKSIYVVGLEQSLHFKQFLKTLELAGHEWSKDCIHVGYGLVRFAEGKLSTRNGDVIFLEDLLKESVQKTSEIIEEKNPELDNKEEVSRKVGIGAVIFTYLKNGRERDIIFDWKEMLSFEGETGPYVQYSYARAKSILRKLGEVKGNVSYDKLVSAEEFDLIKQLKGFNGAILNAIDRLEPSVITRYVIEVAKAFNKFYNAYNISNTSDEELKNARLALVEAASIVIKNALSLIGIDVVEEM.

The 'HIGH' region motif lies at 120 to 130 (PNIAKPFHVGH).

It belongs to the class-I aminoacyl-tRNA synthetase family. In terms of assembly, monomer.

The protein resides in the cytoplasm. The enzyme catalyses tRNA(Arg) + L-arginine + ATP = L-arginyl-tRNA(Arg) + AMP + diphosphate. This chain is Arginine--tRNA ligase, found in Clostridium acetobutylicum (strain ATCC 824 / DSM 792 / JCM 1419 / IAM 19013 / LMG 5710 / NBRC 13948 / NRRL B-527 / VKM B-1787 / 2291 / W).